The following is a 208-amino-acid chain: Fibroblast growth factor-binding protein 2 (208 aa).

A signal peptide spans 1-19 (MKRVALLFLVVICGMGGLG). 3 cysteine pairs are disulfide-bonded: Cys-43-Cys-59, Cys-68-Cys-102, and Cys-77-Cys-113. Residues 130–181 (EPEDGANRDKSSQKTSASVRGAGKSSVKKTGKPAVLPRIKPTQHGQGSENET) form a disordered region. Cys-191 and Cys-199 are disulfide-bonded.

The protein belongs to the fibroblast growth factor-binding protein family.

It is found in the secreted. Its subcellular location is the extracellular space. In Gallus gallus (Chicken), this protein is Fibroblast growth factor-binding protein 2 (FGFBP2).